The sequence spans 604 residues: Protein CBFA2T2 (604 aa).

The disordered stretch occupies residues 25 to 105 (KRVPAMPGSP…SSTSSALTNQ (81 aa)). Phosphoserine is present on serine 33. Residue lysine 38 forms a Glycyl lysine isopeptide (Lys-Gly) (interchain with G-Cter in SUMO2) linkage. Over residues 46–59 (PTMPPLPPINPGGP) the composition is skewed to pro residues. Composition is skewed to polar residues over residues 64–79 (FTPTALSNGINHSPPT) and 88–105 (QRFSNGPASSTSSALTNQ). Residues 107 to 215 (LPATCGARQL…QHEHLLLNTS (109 aa)) form an interaction with PRDM14 region. One can recognise a TAFH domain in the interval 113–208 (ARQLSKLKRF…TPSQYLAQHE (96 aa)). Residues 229–265 (VHGNGKRPSPERREENSFDRDTIAPEPPAKRVCTISP) are disordered. Residues 236 to 251 (PSPERREENSFDRDTI) show a composition bias toward basic and acidic residues. A Phosphoserine modification is found at serine 264. The nervy homology region 2 (NHR2) stretch occupies residues 331–377 (QDELVDHRLTEREWADEWKHLDHALNCIMEMVEKTRRSMAVLRRCQE). Positions 397–427 (RKTGTELVSRQHSPGSADSLSNDSQREFNSR) are disordered. The segment covering 402–419 (ELVSRQHSPGSADSLSND) has biased composition (polar residues). Serine 409 is modified (phosphoserine). A nervy homology region 3 (NHR3) region spans residues 435–484 (VEFWKKTEEAVNKVKIQAMSEVQKAVAEAEQKAFEVIATERARMEQTIAD). Lysine 449 is covalently cross-linked (Glycyl lysine isopeptide (Lys-Gly) (interchain with G-Cter in SUMO2)). The stretch at 451-491 (QAMSEVQKAVAEAEQKAFEVIATERARMEQTIADVKRQAAE) forms a coiled coil. Zn(2+) contacts are provided by cysteine 507, cysteine 510, cysteine 518, cysteine 521, cysteine 527, cysteine 531, histidine 539, and cysteine 543. The segment at 507 to 543 (CWNCGRKASETCSGCNIARYCGSFCQHKDWERHHRLC) adopts an MYND-type zinc-finger fold. Residues 547–604 (LHGQSPHGQGRPLLPVGRGSSARSADCSVPSPALDKTSATTSRSSTPASVTAIDTNGL) form a disordered region. Serine 577 carries the phosphoserine modification. The span at 583–598 (TSATTSRSSTPASVTA) shows a compositional bias: low complexity.

This sequence belongs to the CBFA2T family. Homooligomer. Homotetramerization is mediated by nervy homology region 2. Can interact with RUNX1T1/CBFA2T1 and CBFA2T3/MTG16; heterotetramerization between members of the CBFA2T family is proposed. Forms a heterooligomer with the AML1-MTG8/ETO fusion protein. Interacts with PRDM14. Interacts with RBPJ, GFI1, TCF4. Interacts with TAL1 and CBFA2T3/MTG16; the heteromer with CBFA2T3/MTG16 may function in repression of TAL1. As to expression, ubiquitously expressed in fetal and adult tissues. Highly expressed in adult brain, heart, lung, kidney, lymph node, appendix, thymus, testis, uterus, small intestine, prostate and thymus.

It localises to the nucleus. Transcriptional corepressor which facilitates transcriptional repression via its association with DNA-binding transcription factors and recruitment of other corepressors and histone-modifying enzymes. Via association with PRDM14 is involved in regulation of embryonic stem cell (ESC) pluripotency. Involved in primordial germ cell (PCG) formation. Stabilizes PRDM14 and OCT4 on chromatin in a homooligomerization-dependent manner. Can repress the expression of MMP7 in a ZBTB33-dependent manner. May function as a complex with the chimeric protein RUNX1/AML1-CBFA2T1/MTG8 (AML1-MTG8/ETO fusion protein) which is produced in acute myeloid leukemia with the chromosomal translocation t(8;21). May thus be involved in the repression of AML1-dependent transcription and the induction of G-CSF/CSF3-dependent cell growth. May be a tumor suppressor gene candidate involved in myeloid tumors with the deletion of the 20q11 region. Through heteromerization with CBFA2T3/MTG16 may be involved in regulation of the proliferation and the differentiation of erythroid progenitors by repressing the expression of TAL1 target genes. Required for the maintenance of the secretory cell lineage in the small intestine. Can inhibit Notch signaling probably by association with RBPJ and may be involved in GFI1-mediated Paneth cell differentiation. This is Protein CBFA2T2 (CBFA2T2) from Homo sapiens (Human).